Here is a 222-residue protein sequence, read N- to C-terminus: Ribose-5-phosphate isomerase A (222 aa).

Substrate contacts are provided by residues 28-31, 81-84, and 94-97; these read TGST, DGAD, and KGGG. The active-site Proton acceptor is the E103. K121 provides a ligand contact to substrate.

Belongs to the ribose 5-phosphate isomerase family. In terms of assembly, homodimer.

It carries out the reaction aldehydo-D-ribose 5-phosphate = D-ribulose 5-phosphate. The protein operates within carbohydrate degradation; pentose phosphate pathway; D-ribose 5-phosphate from D-ribulose 5-phosphate (non-oxidative stage): step 1/1. Functionally, catalyzes the reversible conversion of ribose-5-phosphate to ribulose 5-phosphate. In Azoarcus sp. (strain BH72), this protein is Ribose-5-phosphate isomerase A.